A 530-amino-acid polypeptide reads, in one-letter code: Copine-D (530 aa).

C2 domains follow at residues 1-122 (MNPI…RMKM) and 130-248 (LSGS…EFEI). Residues D25, D31, D85, D87, and D100 each coordinate Ca(2+). A VWFA domain is found at 289–507 (NLMVAIDCTA…ALAHETLKEI (219 aa)).

Belongs to the copine family. Requires Ca(2+) as cofactor.

This chain is Copine-D (cpnD), found in Dictyostelium discoideum (Social amoeba).